The primary structure comprises 293 residues: ATP synthase gamma chain (293 aa).

It belongs to the ATPase gamma chain family. F-type ATPases have 2 components, CF(1) - the catalytic core - and CF(0) - the membrane proton channel. CF(1) has five subunits: alpha(3), beta(3), gamma(1), delta(1), epsilon(1). CF(0) has three main subunits: a, b and c.

It localises to the cell membrane. Functionally, produces ATP from ADP in the presence of a proton gradient across the membrane. The gamma chain is believed to be important in regulating ATPase activity and the flow of protons through the CF(0) complex. This Streptococcus agalactiae serotype III (strain NEM316) protein is ATP synthase gamma chain.